Reading from the N-terminus, the 367-residue chain is Histidinol-phosphate aminotransferase (367 aa).

Lysine 221 carries the post-translational modification N6-(pyridoxal phosphate)lysine.

It belongs to the class-II pyridoxal-phosphate-dependent aminotransferase family. Histidinol-phosphate aminotransferase subfamily. Homodimer. The cofactor is pyridoxal 5'-phosphate.

It catalyses the reaction L-histidinol phosphate + 2-oxoglutarate = 3-(imidazol-4-yl)-2-oxopropyl phosphate + L-glutamate. It participates in amino-acid biosynthesis; L-histidine biosynthesis; L-histidine from 5-phospho-alpha-D-ribose 1-diphosphate: step 7/9. This chain is Histidinol-phosphate aminotransferase, found in Paracoccus denitrificans (strain Pd 1222).